The primary structure comprises 206 residues: MVHYKLSYFPIRGAGEVIRQIFVYAGQSFEDHRISIEEWAAVKPTTPFGQLPLLEVDGKVLPQSHSIARFLARQFGINGKCAWEEAQVNSIADQFKDYRNEVRPYVMVKMGFAEGDLDALSKDVFLPGFKKHYGFIYNFLKTAGSGYLVGDSLTFVDLLIAQHTADILSTDPALLEEFPQFKAHQEKVHSNANIKKWLETRPETQF.

A GST N-terminal domain is found at 2–79 (VHYKLSYFPI…FLARQFGING (78 aa)). Glutathione-binding positions include Tyr8, Trp39, Lys43, 49 to 51 (GQL), and 63 to 64 (QS). Residues 81-206 (CAWEEAQVNS…WLETRPETQF (126 aa)) form the GST C-terminal domain.

This sequence belongs to the GST superfamily. Sigma family.

The catalysed reaction is RX + glutathione = an S-substituted glutathione + a halide anion + H(+). Its function is as follows. Conjugation of reduced glutathione to a wide number of exogenous and endogenous hydrophobic electrophiles. This is Probable glutathione S-transferase 8 (gst-8) from Caenorhabditis elegans.